The primary structure comprises 300 residues: Dioxygenase FUM3 (300 aa).

The Fe cation site is built by histidine 146, aspartate 148, and histidine 222.

Belongs to the PhyH family. As to quaternary structure, homodimer. Requires Fe cation as cofactor.

It participates in mycotoxin biosynthesis. Dioxygenase; part of the gene cluster that mediates the biosynthesis of fumonisins B1 (FB1), B2 (FB2), B3 (FB3), and B4 (FB4), which are carcinogenic mycotoxins. Within the pathway, FUM3 performs the C-5 hydroxylation present in FB1 and FB2 and which occurs late in the biosynthesis. The biosynthesis starts with the FUM1-catalyzed carbon chain assembly from one molecule of acetyl-CoA, eight molecules of malonyl-CoA, and two molecules of methionine (in S-adenosyl form). The C18 polyketide chain is released from the enzyme by a nucleophilic attack of a carbanion, which is derived from R-carbon of alanine by decarboxylation, on the carbonyl carbon of polyketide acyl chain. This step is catalyzed by the pyridoxal 5'-phosphate-dependent aminoacyl transferase FUM8. The resultant 3-keto intermediate is then stereospecifically reduced to a 3-hydroxyl product by reductase FUM13. Subsequent oxidations at C-10 by the cytochrome P450 monooxygenase FUM2, C-14 and C-15 by FUM6, FUM12 or FUM15, tricarballylic esterification of the hydroxyl groups on C-14 and C-15 by acyltransferase FUM14, and C-5 hydroxylation by 2-keto-glutarate-dependent dioxygenase FUM3 furnish the biosynthesis of fumonisins. The tricarballylic moieties are most likely derived from the citric acid cycle, and their addition to the carbon backbone may involve FUM7, FUM10, FUM11 and FUM14. The protein is Dioxygenase FUM3 of Gibberella moniliformis (strain M3125 / FGSC 7600) (Maize ear and stalk rot fungus).